The primary structure comprises 147 residues: 2-amino-4-hydroxy-6-hydroxymethyldihydropteridine pyrophosphokinase (147 aa).

It belongs to the HPPK family.

The enzyme catalyses 6-hydroxymethyl-7,8-dihydropterin + ATP = (7,8-dihydropterin-6-yl)methyl diphosphate + AMP + H(+). It functions in the pathway cofactor biosynthesis; tetrahydrofolate biosynthesis; 2-amino-4-hydroxy-6-hydroxymethyl-7,8-dihydropteridine diphosphate from 7,8-dihydroneopterin triphosphate: step 4/4. Catalyzes the transfer of pyrophosphate from adenosine triphosphate (ATP) to 6-hydroxymethyl-7,8-dihydropterin, an enzymatic step in folate biosynthesis pathway. The sequence is that of 2-amino-4-hydroxy-6-hydroxymethyldihydropteridine pyrophosphokinase (folK) from Porphyromonas gingivalis (strain ATCC 33277 / DSM 20709 / CIP 103683 / JCM 12257 / NCTC 11834 / 2561).